Reading from the N-terminus, the 145-residue chain is 3-hydroxyacyl-[acyl-carrier-protein] dehydratase FabZ (145 aa).

His47 is a catalytic residue.

It belongs to the thioester dehydratase family. FabZ subfamily.

It is found in the cytoplasm. It carries out the reaction a (3R)-hydroxyacyl-[ACP] = a (2E)-enoyl-[ACP] + H2O. Its function is as follows. Involved in unsaturated fatty acids biosynthesis. Catalyzes the dehydration of short chain beta-hydroxyacyl-ACPs and long chain saturated and unsaturated beta-hydroxyacyl-ACPs. The polypeptide is 3-hydroxyacyl-[acyl-carrier-protein] dehydratase FabZ (Aromatoleum aromaticum (strain DSM 19018 / LMG 30748 / EbN1) (Azoarcus sp. (strain EbN1))).